A 190-amino-acid polypeptide reads, in one-letter code: MEFSLQYITIFIFVILFLIGLFSSKSRSTRRNEKKSRLYLSTENKINIVNKNDHLDVVILSKYKRKALMNKSEYQLFLRLEKLLSKGYQEFRLFTQVSMGEFLESIDKEAHFAINSKRVDFLIVDKNGYAVIVIEYQGQGHYQDNAAKRDAVKREACRKAGVIFLEFQPNYGKAELEFVGENLKRYLIKN.

Positions 1-28 (MEFSLQYITIFIFVILFLIGLFSSKSRS) are cleaved as a signal peptide.

This is an uncharacterized protein from Haemophilus influenzae (strain ATCC 51907 / DSM 11121 / KW20 / Rd).